A 360-amino-acid chain; its full sequence is Histidinol-phosphate aminotransferase (360 aa).

An N6-(pyridoxal phosphate)lysine modification is found at Lys-211.

This sequence belongs to the class-II pyridoxal-phosphate-dependent aminotransferase family. Histidinol-phosphate aminotransferase subfamily. In terms of assembly, homodimer. Pyridoxal 5'-phosphate serves as cofactor.

The enzyme catalyses L-histidinol phosphate + 2-oxoglutarate = 3-(imidazol-4-yl)-2-oxopropyl phosphate + L-glutamate. Its pathway is amino-acid biosynthesis; L-histidine biosynthesis; L-histidine from 5-phospho-alpha-D-ribose 1-diphosphate: step 7/9. The sequence is that of Histidinol-phosphate aminotransferase from Sodalis glossinidius (strain morsitans).